The chain runs to 234 residues: Large ribosomal subunit protein uL1 (234 aa).

The protein belongs to the universal ribosomal protein uL1 family. As to quaternary structure, part of the 50S ribosomal subunit.

Its function is as follows. Binds directly to 23S rRNA. The L1 stalk is quite mobile in the ribosome, and is involved in E site tRNA release. Functionally, protein L1 is also a translational repressor protein, it controls the translation of the L11 operon by binding to its mRNA. The polypeptide is Large ribosomal subunit protein uL1 (Bdellovibrio bacteriovorus (strain ATCC 15356 / DSM 50701 / NCIMB 9529 / HD100)).